The primary structure comprises 580 residues: Extracellular protease (580 aa).

The N-terminal stretch at 1–32 (MSTASLRKRTGSLTILGASALTSLLLAMPAFA) is a signal peptide. Residues 33-136 (GEVYLDGLAT…VEVDQILHAT (104 aa)) constitute a propeptide that is removed on maturation. One can recognise a Peptidase S8 domain in the interval 147–465 (QWAFGTTNAG…AGIVNADAAV (319 aa)). Catalysis depends on charge relay system residues Asp177 and His237. Disulfide bonds link Cys225–Cys273 and Cys315–Cys352. Ser409 acts as the Charge relay system in catalysis. A disulfide bridge connects residues Cys450 and Cys454.

The protein belongs to the peptidase S8 family.

The protein resides in the secreted. The chain is Extracellular protease from Xanthomonas campestris pv. campestris (strain ATCC 33913 / DSM 3586 / NCPPB 528 / LMG 568 / P 25).